The primary structure comprises 301 residues: Putative S-adenosyl-L-methionine-dependent methyltransferase BCG_0775c (301 aa).

S-adenosyl-L-methionine contacts are provided by residues Asp-130 and Asp-159–Leu-160.

This sequence belongs to the UPF0677 family.

Its function is as follows. Exhibits S-adenosyl-L-methionine-dependent methyltransferase activity. This chain is Putative S-adenosyl-L-methionine-dependent methyltransferase BCG_0775c, found in Mycobacterium bovis (strain BCG / Pasteur 1173P2).